The chain runs to 476 residues: RuvB-like 1 (476 aa).

The disordered stretch occupies residues 1–23 (MDMEVDEAISGTSSSRLAPIEEV). Position 89 to 96 (89 to 96 (GPPATGKT)) interacts with ATP.

It belongs to the RuvB family. Forms homohexameric rings. May form a dodecamer with ruvb-2 made of two stacked hexameric rings. In terms of tissue distribution, expressed in gonadal cells.

The protein resides in the cytoplasm. The protein localises to the nucleus. It carries out the reaction ATP + H2O = ADP + phosphate + H(+). Its function is as follows. Possesses single-stranded DNA-stimulated ATPase and ATP dependent DNA helicase (3' to 5') activity suggesting a role in nuclear processes such as recombination and transcription. May participate in several chromatin remodeling complexes that mediate the ATP-dependent exchange of histones and remodel chromatin by shifting nucleosomes. Involvement in these complexes is likely required for transcriptional activation of selected genes and DNA repair in response to DNA damage. Involved in the Ce-Tor signaling pathway whereby it is required for the accumulation and localization of box C/D snoRNP to nucleoli to regulate ribosomal maturation and thus protein synthesis. Antagonizes the transcriptional activity of transcription factor pha-4, to control postembryonic development and adult longevity. Has a role in pharyngeal development. Has a role in gonadal development. The sequence is that of RuvB-like 1 from Caenorhabditis elegans.